The primary structure comprises 244 residues: Methylthioribulose-1-phosphate dehydratase (244 aa).

Cysteine 89 provides a ligand contact to substrate. Positions 107 and 109 each coordinate Zn(2+). Glutamate 130 functions as the Proton donor/acceptor in the catalytic mechanism. Histidine 192 contributes to the Zn(2+) binding site.

It belongs to the aldolase class II family. MtnB subfamily. The cofactor is Zn(2+).

The protein resides in the cytoplasm. The enzyme catalyses 5-(methylsulfanyl)-D-ribulose 1-phosphate = 5-methylsulfanyl-2,3-dioxopentyl phosphate + H2O. Its pathway is amino-acid biosynthesis; L-methionine biosynthesis via salvage pathway; L-methionine from S-methyl-5-thio-alpha-D-ribose 1-phosphate: step 2/6. Catalyzes the dehydration of methylthioribulose-1-phosphate (MTRu-1-P) into 2,3-diketo-5-methylthiopentyl-1-phosphate (DK-MTP-1-P). The protein is Methylthioribulose-1-phosphate dehydratase of Saccharomyces cerevisiae (strain AWRI1631) (Baker's yeast).